The primary structure comprises 485 residues: 6-phosphogluconate dehydrogenase, decarboxylating (485 aa).

Residues 12 to 17 (GLAVMG), 35 to 37 (NRT), 77 to 79 (VKA), and N105 each bind NADP(+). Residues N105 and 131-133 (SGG) contribute to the substrate site. Catalysis depends on K186, which acts as the Proton acceptor. Residue 189–190 (HN) participates in substrate binding. The active-site Proton donor is E193. The substrate site is built by Y194, K263, R290, R449, and H455.

It belongs to the 6-phosphogluconate dehydrogenase family. In terms of assembly, homodimer.

It catalyses the reaction 6-phospho-D-gluconate + NADP(+) = D-ribulose 5-phosphate + CO2 + NADPH. The protein operates within carbohydrate degradation; pentose phosphate pathway; D-ribulose 5-phosphate from D-glucose 6-phosphate (oxidative stage): step 3/3. Its function is as follows. Catalyzes the oxidative decarboxylation of 6-phosphogluconate to ribulose 5-phosphate and CO(2), with concomitant reduction of NADP to NADPH. The chain is 6-phosphogluconate dehydrogenase, decarboxylating (6-PGD) from Cunninghamella elegans.